The chain runs to 217 residues: D-methionine transport system permease protein MetI (217 aa).

Residues 1–19 (MSEPMMWLLVRGVWETLAM) are Periplasmic-facing. In terms of domain architecture, ABC transmembrane type-1 spans 13-204 (VWETLAMTFV…LLVILVYLIQ (192 aa)). The chain crosses the membrane as a helical span at residues 20–40 (TFVSGFFGFVIGLPVGVLLYV). Topologically, residues 41-57 (TRPGQIIANAKLYRTVS) are cytoplasmic. A helical membrane pass occupies residues 58–78 (AIVNIFRSIPFIILLVWMIPF). Residues 79–80 (TR) are Periplasmic-facing. A helical transmembrane segment spans residues 81–101 (VIVGTSIGLQAAIVPLTVGAA). The Cytoplasmic segment spans residues 102-151 (PFIARMVENALLEIPTGLIEASRAMGATPMQIVRKVLLPEALPGLVNAAT). A helical membrane pass occupies residues 152 to 172 (ITLITLVGYSAMGGAVGAGGL). The Periplasmic segment spans residues 173 to 185 (GQIGYQYGYIGYN). Residues 186–206 (ATVMNTVLVLLVILVYLIQFA) form a helical membrane-spanning segment. The Cytoplasmic segment spans residues 207 to 217 (GDRIVRAVTRK).

Belongs to the binding-protein-dependent transport system permease family. CysTW subfamily.

It is found in the cell inner membrane. Functionally, part of the binding-protein-dependent transport system for D-methionine and the toxic methionine analog alpha-methyl-methionine. Probably responsible for the translocation of the substrate across the membrane. In terms of biological role, (Microbial infection) Probably transports the toxic C-terminal region of CdiA from E.coli strain MHI813 across the inner membrane to the cytoplasm, where CdiA has a toxic effect. Toxin transport is strain-specific, mutations in this gene do not confer resistance to several other tested CdiA toxins. This is D-methionine transport system permease protein MetI (metI) from Escherichia coli (strain K12).